Consider the following 409-residue polypeptide: bZIP transcription factor 16 (409 aa).

The span at 1–16 (MASNEMEKSSKEKEPK) shows a compositional bias: basic and acidic residues. 4 disordered regions span residues 1 to 63 (MASN…VASS), 118 to 236 (NGMT…LPVS), 274 to 327 (MHGK…LRKQ), and 362 to 409 (TTEN…KDST). Residues 24–34 (APPSSQEPSSA) are compositionally biased toward low complexity. Positions 133–145 (GDAKQSEVKEKLP) are enriched in basic and acidic residues. Residues 152–178 (SLGSLNMITGKNNEPGKNSGASANGAY) are compositionally biased toward polar residues. The segment covering 179–203 (SKSGESASDGSSEGSDGNSQNDSGS) has biased composition (low complexity). The span at 216-228 (NGGSANGPQNGSA) shows a compositional bias: polar residues. In terms of domain architecture, bZIP spans 305–368 (ELKRQRRKQS…EELTTENTSL (64 aa)). A Bipartite nuclear localization signal motif is present at residues 307–323 (KRQRRKQSNRESARRSR). Residues 307-326 (KRQRRKQSNRESARRSRLRK) form a basic motif region. Over residues 314-327 (SNRESARRSRLRKQ) the composition is skewed to basic and acidic residues. The tract at residues 333–368 (LAQRAEVLNEENTNLRAEINKLKSQCEELTTENTSL) is leucine-zipper. Residues 398–409 (AERKVDSYKDST) show a composition bias toward basic and acidic residues.

This sequence belongs to the bZIP family. Monomer, homodimer and heterodimers with BZIP68 and GBF1/BZIP41. Heterodimers with GBF2/BZIP54 and GBF3/BZIP55. Binds DNA as monomer and forms homo- and heterodimers. The monomeric form is redox regulated. Interacts with GIP1.

The protein localises to the nucleus. Transcriptional activator that binds to the G-box motif (5'-CACGTG-3') and other cis-acting elements with 5'-ACGT-3' core, such as Hex, C-box and as-1 motifs. Possesses high binding affinity to G-box, much lower affinity to Hex and C-box, and little affinity to as-1 element. G-box and G-box-like motifs are cis-acting elements defined in promoters of certain plant genes which are regulated by such diverse stimuli as light-induction or hormone control. Binds to the G-box motif 5'-CACGTG-3' of LHCB2.4 (At3g27690) promoter. May act as transcriptional repressor in light-regulated expression of LHCB2.4. Binds DNA as monomer. DNA-binding activity is redox-dependent. The protein is bZIP transcription factor 16 of Arabidopsis thaliana (Mouse-ear cress).